We begin with the raw amino-acid sequence, 377 residues long: Nitric oxide reductase FlRd-NAD(+) reductase (377 aa).

This sequence belongs to the FAD-dependent oxidoreductase family. Requires FAD as cofactor.

The protein localises to the cytoplasm. The catalysed reaction is 2 reduced [nitric oxide reductase rubredoxin domain] + NAD(+) + H(+) = 2 oxidized [nitric oxide reductase rubredoxin domain] + NADH. It functions in the pathway nitrogen metabolism; nitric oxide reduction. Its function is as follows. One of at least two accessory proteins for anaerobic nitric oxide (NO) reductase. Reduces the rubredoxin moiety of NO reductase. The polypeptide is Nitric oxide reductase FlRd-NAD(+) reductase (Escherichia coli (strain 55989 / EAEC)).